The primary structure comprises 160 residues: Serine-protein kinase RsbW (160 aa).

This sequence belongs to the anti-sigma-factor family.

It catalyses the reaction L-seryl-[protein] + ATP = O-phospho-L-seryl-[protein] + ADP + H(+). The enzyme catalyses L-threonyl-[protein] + ATP = O-phospho-L-threonyl-[protein] + ADP + H(+). Negative regulator of sigma-B activity. Phosphorylates and inactivates its specific antagonist protein, RsbV. Upon phosphorylation of RsbV, RsbW is released and binds to sigma-B, thereby blocking its ability to form an RNA polymerase holoenzyme (E-sigma-B). This chain is Serine-protein kinase RsbW, found in Bacillus velezensis (strain DSM 23117 / BGSC 10A6 / LMG 26770 / FZB42) (Bacillus amyloliquefaciens subsp. plantarum).